Here is a 399-residue protein sequence, read N- to C-terminus: Fructose-1,6-bisphosphate aldolase/phosphatase (399 aa).

Residue Asp-11 is the Proton acceptor; for FBP phosphatase activity of the active site. Residues Asp-11, His-18, Asp-52, and Asp-53 each contribute to the Mg(2+) site. His-18 serves as a coordination point for beta-D-fructose 1,6-bisphosphate. His-18 lines the dihydroxyacetone phosphate pocket. Tyr-91 lines the beta-D-fructose 1,6-bisphosphate pocket. Gln-95 is a binding site for Mg(2+). Residue 104-105 (GN) participates in beta-D-fructose 1,6-bisphosphate binding. Asp-132 lines the Mg(2+) pocket. Lys-133 is a beta-D-fructose 1,6-bisphosphate binding site. Position 133 (Lys-133) interacts with dihydroxyacetone phosphate. The Proton donor/acceptor; for FBP aldolase activity role is filled by Tyr-229. Lys-232, Asp-233, and Asp-234 together coordinate Mg(2+). The Schiff-base intermediate with DHAP; for FBP aldolase activity role is filled by Lys-232. Residues 242–243 (QS), Arg-266, Asp-297, and Tyr-358 contribute to the beta-D-fructose 1,6-bisphosphate site. Arg-266 and Asp-297 together coordinate dihydroxyacetone phosphate.

This sequence belongs to the FBP aldolase/phosphatase family. Homooctamer; dimer of tetramers. It depends on Mg(2+) as a cofactor.

It catalyses the reaction beta-D-fructose 1,6-bisphosphate + H2O = beta-D-fructose 6-phosphate + phosphate. The enzyme catalyses beta-D-fructose 1,6-bisphosphate = D-glyceraldehyde 3-phosphate + dihydroxyacetone phosphate. Its pathway is carbohydrate biosynthesis; gluconeogenesis. Its function is as follows. Catalyzes two subsequent steps in gluconeogenesis: the aldol condensation of dihydroxyacetone phosphate (DHAP) and glyceraldehyde-3-phosphate (GA3P) to fructose-1,6-bisphosphate (FBP), and the dephosphorylation of FBP to fructose-6-phosphate (F6P). This chain is Fructose-1,6-bisphosphate aldolase/phosphatase, found in Pyrobaculum neutrophilum (strain DSM 2338 / JCM 9278 / NBRC 100436 / V24Sta) (Thermoproteus neutrophilus).